We begin with the raw amino-acid sequence, 39 residues long: Photosystem II reaction center protein Y (39 aa).

A helical transmembrane segment spans residues 4 to 22 (TLVVFAPIIAALAWVIFNI).

It belongs to the PsbY family. In terms of assembly, PSII is composed of 1 copy each of membrane proteins PsbA, PsbB, PsbC, PsbD, PsbE, PsbF, PsbH, PsbI, PsbJ, PsbK, PsbL, PsbM, PsbT, PsbX, PsbY, Psb30/Ycf12, peripheral proteins PsbO, CyanoQ (PsbQ), PsbU, PsbV and a large number of cofactors. It forms dimeric complexes.

It localises to the cellular thylakoid membrane. Its function is as follows. Loosely associated component of the core of photosystem II (PSII), it is not always seen in crystals. PSII is a light-driven water plastoquinone oxidoreductase, using light energy to abstract electrons from H(2)O, generating a proton gradient subsequently used for ATP formation. The protein is Photosystem II reaction center protein Y of Prochlorococcus marinus (strain MIT 9515).